Here is a 634-residue protein sequence, read N- to C-terminus: Protein IcfG (634 aa).

Positions 306-361 (HHSTVPILDLTKASQAIAAGDLDYEININQGNRQDEIGILGNSFIYMKNQIKTLIA) constitute an HAMP domain. The region spanning 385–633 (PISLPDLQQW…DDITMIAVYR (249 aa)) is the PPM-type phosphatase domain.

Its function is as follows. Involved in cross-regulation of inorganic carbon and glucose metabolisms. This Synechocystis sp. (strain ATCC 27184 / PCC 6803 / Kazusa) protein is Protein IcfG (icfG).